We begin with the raw amino-acid sequence, 287 residues long: Lipoyl synthase (287 aa).

C34, C39, C45, C60, C64, C67, and S273 together coordinate [4Fe-4S] cluster. The 217-residue stretch at 46 to 262 (WNKRHATVMI…KYIAYSKGFL (217 aa)) folds into the Radical SAM core domain.

The protein belongs to the radical SAM superfamily. Lipoyl synthase family. It depends on [4Fe-4S] cluster as a cofactor.

The protein localises to the cytoplasm. It catalyses the reaction [[Fe-S] cluster scaffold protein carrying a second [4Fe-4S](2+) cluster] + N(6)-octanoyl-L-lysyl-[protein] + 2 oxidized [2Fe-2S]-[ferredoxin] + 2 S-adenosyl-L-methionine + 4 H(+) = [[Fe-S] cluster scaffold protein] + N(6)-[(R)-dihydrolipoyl]-L-lysyl-[protein] + 4 Fe(3+) + 2 hydrogen sulfide + 2 5'-deoxyadenosine + 2 L-methionine + 2 reduced [2Fe-2S]-[ferredoxin]. The protein operates within protein modification; protein lipoylation via endogenous pathway; protein N(6)-(lipoyl)lysine from octanoyl-[acyl-carrier-protein]: step 2/2. In terms of biological role, catalyzes the radical-mediated insertion of two sulfur atoms into the C-6 and C-8 positions of the octanoyl moiety bound to the lipoyl domains of lipoate-dependent enzymes, thereby converting the octanoylated domains into lipoylated derivatives. This Wolbachia pipientis wMel protein is Lipoyl synthase.